Reading from the N-terminus, the 487-residue chain is Glutamate--tRNA ligase 2 (487 aa).

The 'HIGH' region motif lies at 24 to 34 (PSPTGFLHIGG). Residues 258 to 262 (KLSKR) carry the 'KMSKS' region motif. Lysine 261 is an ATP binding site.

This sequence belongs to the class-I aminoacyl-tRNA synthetase family. Glutamate--tRNA ligase type 1 subfamily. As to quaternary structure, monomer.

Its subcellular location is the cytoplasm. It catalyses the reaction tRNA(Glu) + L-glutamate + ATP = L-glutamyl-tRNA(Glu) + AMP + diphosphate. Its function is as follows. Catalyzes the attachment of glutamate to tRNA(Glu) in a two-step reaction: glutamate is first activated by ATP to form Glu-AMP and then transferred to the acceptor end of tRNA(Glu). The sequence is that of Glutamate--tRNA ligase 2 from Novosphingobium aromaticivorans (strain ATCC 700278 / DSM 12444 / CCUG 56034 / CIP 105152 / NBRC 16084 / F199).